Here is a 424-residue protein sequence, read N- to C-terminus: MAKNIQAIRGMNDYLPGETALWQRIEGSLKQVLGSYGYSEIRLPIVEQTPLFKRAIGEVTDVVEKEMYTFEDRNGDSLTLRPEGTAGCVRAGIEHGLLYNQEQRLWYVGPMFRHERPQKGRYRQFHQIGAEVFGLQGPDIDAELIMLTARWWRELGISDHVSLELNSIGSLEARANYRDALVAYLEQFTDKLDEDSKRRMYTNPLRVLDSKNPDVQALLNDAPALGDYLDEESKAHFAGLCALLDDAGIRYTVNQRLVRGLDYYNRTVFEWVTTSLGSQGTVCAGGRYDGLVEQLGGRATPGVGFAMGLERLVLLVQAVNPEFKADPVVDIYLVASGTDTQSAAMRLAEQVRDALPGVKLMTNHGGGNFKKQFARADKWGARIALVVGESEIADGNVVVKDLRSGEQTTVTQESVAAHLRTLLG.

It belongs to the class-II aminoacyl-tRNA synthetase family. Homodimer.

The protein resides in the cytoplasm. The enzyme catalyses tRNA(His) + L-histidine + ATP = L-histidyl-tRNA(His) + AMP + diphosphate + H(+). The protein is Histidine--tRNA ligase of Klebsiella pneumoniae (strain 342).